A 552-amino-acid polypeptide reads, in one-letter code: Olefin beta-lactone synthetase (552 aa).

Residues 182-190 (TSGSTGVPK), 316-321 (TPYGAT), D425, and R440 each bind ATP.

The protein belongs to the ATP-dependent AMP-binding enzyme family. Monomer.

It catalyses the reaction a (2R,3S)-2-alkyl-3-hydroxyalkanoate + ATP = a cis-3-alkyl-4-alkyloxetan-2-one + AMP + diphosphate. Involved in olefin biosynthesis. Catalyzes the conversion of beta-hydroxy acid substrates to beta-lactones in the presence of ATP. Can use all four stereoisomers of 2-hexyl-3-hydroxydecanoic acid. The protein is Olefin beta-lactone synthetase of Stenotrophomonas maltophilia (strain K279a).